The following is a 712-amino-acid chain: Polyribonucleotide nucleotidyltransferase (712 aa).

Mg(2+) is bound by residues Asp493 and Asp499. Positions 560–622 (PRLTKLTIDP…RDAEAAIERI (63 aa)) constitute a KH domain. Residues 632–700 (GEDYVGTVKG…DDGKMRLTRK (69 aa)) form the S1 motif domain.

It belongs to the polyribonucleotide nucleotidyltransferase family. Mg(2+) is required as a cofactor.

It is found in the cytoplasm. It carries out the reaction RNA(n+1) + phosphate = RNA(n) + a ribonucleoside 5'-diphosphate. Functionally, involved in mRNA degradation. Catalyzes the phosphorolysis of single-stranded polyribonucleotides processively in the 3'- to 5'-direction. This Salinibacter ruber (strain DSM 13855 / M31) protein is Polyribonucleotide nucleotidyltransferase.